Reading from the N-terminus, the 165-residue chain is Protein YELLOW LEAF 1, choloroplastic (165 aa).

A chloroplast-targeting transit peptide spans 1–51 (MPPLATMSSPGSLLLLTPAVYQGIGRNRGGQSQEGQSISSSRSLKTKLSVS). The disordered stretch occupies residues 71–118 (TQTARRKSFSGPTSPPSGSVKEKVRSPKLDDGGTGFPPFRFGGGGGGG). Low complexity predominate over residues 79–89 (FSGPTSPPSGS). Residues 90 to 101 (VKEKVRSPKLDD) are compositionally biased toward basic and acidic residues.

Interacts with atpB. Highly expressed in leaves. Expressed in leaf sheaths. Expressed at low levels in stems.

Its subcellular location is the plastid. It is found in the chloroplast. Functionally, required for photosynthetic protein complex assembly in chloroplast thylakoid membranes during leaf development. Maintains the abundance of the core protein complex PsaA-PsaB of photosystem I (PSI) in the thylakoid membrane. May play a role in the efficient biogenesis of the chloroplast ATP synthase complex, possibly by interacting with the beta subunit atpB. This Oryza sativa subsp. japonica (Rice) protein is Protein YELLOW LEAF 1, choloroplastic.